The following is a 279-amino-acid chain: Diaminopimelate epimerase (279 aa).

Substrate is bound by residues Asn-11 and Asn-63. Catalysis depends on Cys-72, which acts as the Proton donor. Substrate-binding positions include 73 to 74 (GN), Asn-161, Asn-194, and 212 to 213 (ER). Cys-221 (proton acceptor) is an active-site residue. 222 to 223 (GT) serves as a coordination point for substrate.

It belongs to the diaminopimelate epimerase family. As to quaternary structure, homodimer.

It is found in the cytoplasm. The enzyme catalyses (2S,6S)-2,6-diaminopimelate = meso-2,6-diaminopimelate. It functions in the pathway amino-acid biosynthesis; L-lysine biosynthesis via DAP pathway; DL-2,6-diaminopimelate from LL-2,6-diaminopimelate: step 1/1. In terms of biological role, catalyzes the stereoinversion of LL-2,6-diaminopimelate (L,L-DAP) to meso-diaminopimelate (meso-DAP), a precursor of L-lysine and an essential component of the bacterial peptidoglycan. This is Diaminopimelate epimerase from Moorella thermoacetica (strain ATCC 39073 / JCM 9320).